Here is a 150-residue protein sequence, read N- to C-terminus: Nitric oxide reductase subunit C (150 aa).

Residues 13 to 29 (VFYGGSIFFILIFGALT) form a helical; Signal-anchor membrane-spanning segment. Heme c contacts are provided by cysteine 62, cysteine 65, and histidine 66.

As to quaternary structure, heterodimer of cytochromes b (large subunit) and c (small subunit).

The protein localises to the cell membrane. Functionally, component of the anaerobic respiratory chain that transforms nitrate to dinitrogen (denitrification). This Paracoccus denitrificans protein is Nitric oxide reductase subunit C (norC).